We begin with the raw amino-acid sequence, 103 residues long: Stefin-2 (103 aa).

The Secondary area of contact signature appears at Q52–G56.

The protein belongs to the cystatin family.

Its subcellular location is the cytoplasm. Functionally, this is an intracellular thiol proteinase inhibitor. This Mus musculus (Mouse) protein is Stefin-2 (Stfa2).